A 502-amino-acid polypeptide reads, in one-letter code: Aspartyl/glutamyl-tRNA(Asn/Gln) amidotransferase subunit B (502 aa).

Belongs to the GatB/GatE family. GatB subfamily. In terms of assembly, heterotrimer of A, B and C subunits.

It catalyses the reaction L-glutamyl-tRNA(Gln) + L-glutamine + ATP + H2O = L-glutaminyl-tRNA(Gln) + L-glutamate + ADP + phosphate + H(+). The enzyme catalyses L-aspartyl-tRNA(Asn) + L-glutamine + ATP + H2O = L-asparaginyl-tRNA(Asn) + L-glutamate + ADP + phosphate + 2 H(+). Its function is as follows. Allows the formation of correctly charged Asn-tRNA(Asn) or Gln-tRNA(Gln) through the transamidation of misacylated Asp-tRNA(Asn) or Glu-tRNA(Gln) in organisms which lack either or both of asparaginyl-tRNA or glutaminyl-tRNA synthetases. The reaction takes place in the presence of glutamine and ATP through an activated phospho-Asp-tRNA(Asn) or phospho-Glu-tRNA(Gln). The chain is Aspartyl/glutamyl-tRNA(Asn/Gln) amidotransferase subunit B from Pseudarthrobacter chlorophenolicus (strain ATCC 700700 / DSM 12829 / CIP 107037 / JCM 12360 / KCTC 9906 / NCIMB 13794 / A6) (Arthrobacter chlorophenolicus).